The sequence spans 998 residues: Collagen alpha-1(I) chain (998 aa).

A disordered region spans residues 1 to 998 (GGVSVPGPMG…PGPPGPPGPP (998 aa)). Pro-18, Pro-21, Pro-24, Pro-33, Pro-48, Pro-63, Pro-69, Pro-78, and Pro-84 each carry 4-hydroxyproline. Residues 26 to 39 (PQGFQGPPGSSGPM) show a composition bias toward low complexity. Positions 51-65 (NGDDGEAGKPGRPGE) are enriched in basic and acidic residues. Lys-87 is modified (5-hydroxylysine; alternate). The O-linked (Gal...) hydroxylysine; alternate glycan is linked to Lys-87. Phosphoserine is present on Ser-93. Over residues 101–115 (DAGPAGPKQMGPRGL) the composition is skewed to low complexity. Pro-116, Pro-122, Pro-143, Pro-152, Pro-155, Pro-182, Pro-185, Pro-197, Pro-203, Pro-212, Pro-218, Pro-221, and Pro-236 each carry 4-hydroxyproline. Low complexity predominate over residues 122–140 (PGASGPAGARGNDGATGAA). Residues 142–154 (PPGPTGPAGPPGF) are compositionally biased toward pro residues. Residues 188–238 (AGAAGPAGNPGADGQPGAKGANGAPGIAGAPGFPGARGPSGPQGPSGAPGP) are compositionally biased toward low complexity. Lys-239 is modified (5-hydroxylysine). 4-hydroxyproline occurs at positions 245, 248, 260, 269, 284, 290, 299, and 305. Gly residues predominate over residues 294–303 (GERGGPGSRG). At Lys-314 the chain carries 5-hydroxylysine. 4-hydroxyproline occurs at positions 323, 332, 338, 344, 353, 356, 365, 374, 380, 392, 401, 410, 413, 431, 449, 455, 461, 467, 473, 479, 491, 500, 511, 523, 526, 532, 538, and 547. Positions 347–401 (KGLTGSPGSPGPDGKTGPPGPAGQDGRPGPAGPPGARGQAGVMGFPGPKGAAGEP) are enriched in low complexity. A compositionally biased stretch (low complexity) spans 443-470 (QGPAGSPGFQGLPGPAGPPGEAGKPGEQ). Low complexity predominate over residues 513-535 (NDGAKGDAGAPGAPGSQGAPGLQ). 5-hydroxylysine is present on Lys-559. Residues Pro-565 and Pro-580 each carry the 4-hydroxyproline modification. Residues 592–606 (TGPSGPAGPTGARGA) show a composition bias toward low complexity. Ser-595 carries the post-translational modification Phosphoserine. 8 positions are modified to 4-hydroxyproline: Pro-607, Pro-613, Pro-616, Pro-625, Pro-631, Pro-649, Pro-658, and Pro-667. Residues 619 to 646 (AGFAGPPGADGQPGAKGEPGDAGAKGDA) show a composition bias toward low complexity. Residues 648–660 (PPGPAGPTGPPGP) are compositionally biased toward pro residues. Lys-670 carries the post-translational modification 5-hydroxylysine. The span at 675-691 (SAGPPGATGFPGAAGRV) shows a compositional bias: low complexity. 4-hydroxyproline occurs at positions 679 and 685. At Pro-693 the chain carries 3-hydroxyproline. Pro-694, Pro-703, Pro-706, Pro-727, Pro-736, Pro-744, Pro-753, Pro-771, Pro-780, Pro-783, Pro-789, Pro-804, Pro-810, Pro-816, Pro-825, and Pro-831 each carry 4-hydroxyproline. Residues 720 to 729 (ETGPAGRPGE) are compositionally biased toward low complexity. Low complexity predominate over residues 741–762 (KGSPGADGPAGAPGTPGPQGIA). Residues 803–813 (PPGPMGPPGLA) are compositionally biased toward pro residues. Low complexity predominate over residues 815–830 (PPGEAGREGSPGAEGS). Lys-840 is modified (5-hydroxylysine). Residues 848-863 (PGPPGAPGAPGAPGPV) are compositionally biased toward pro residues. 4-hydroxyproline occurs at positions 851, 854, and 857. Over residues 884–898 (AGPAGARGPAGPQGP) the composition is skewed to low complexity. The span at 899-913 (RGDKGETGEQGDRGI) shows a compositional bias: basic and acidic residues. Lys-902 bears the 5-hydroxylysine mark. Lys-914 carries the 5-hydroxylysine; alternate modification. Lys-914 carries an O-linked (Gal...) hydroxylysine; alternate glycan. 4 positions are modified to 4-hydroxyproline: Pro-929, Pro-932, Pro-950, and Pro-965. Positions 932-965 (PGEQGPSGASGPAGPRGPPGSAGTPGKDGLNGLP) are enriched in low complexity. Position 970 is a 3-hydroxyproline (Pro-970). Pro-971 is subject to 4-hydroxyproline. A compositionally biased stretch (pro residues) spans 983-998 (VGPPGPPGPPGPPGPP). Pro-985 carries the post-translational modification 3-hydroxyproline. Pro-986 bears the 4-hydroxyproline mark. At Pro-988 the chain carries 3-hydroxyproline. Pro-989 carries the 4-hydroxyproline modification. A 3-hydroxyproline modification is found at Pro-991. 4-hydroxyproline occurs at positions 992, 995, and 998.

Belongs to the fibrillar collagen family. Trimers of one alpha 2(I) and two alpha 1(I) chains. In terms of processing, contains mostly 4-hydroxyproline. Proline residues at the third position of the tripeptide repeating unit (G-X-Y) are hydroxylated in some or all of the chains. Contains 3-hydroxyproline at a few sites. This modification occurs on the first proline residue in the sequence motif Gly-Pro-Hyp, where Hyp is 4-hydroxyproline. Post-translationally, lysine residues at the third position of the tripeptide repeating unit (G-X-Y) are 5-hydroxylated in some or all of the chains. In terms of processing, O-glycosylated on hydroxylated lysine residues. The O-linked glycan consists of a Glc-Gal disaccharide. Expressed in bones.

It localises to the secreted. The protein localises to the extracellular space. It is found in the extracellular matrix. Its function is as follows. Type I collagen is a member of group I collagen (fibrillar forming collagen). In Glyptodon sp. (strain SLP-2019) (Giant armadillo), this protein is Collagen alpha-1(I) chain.